Here is a 432-residue protein sequence, read N- to C-terminus: Myb family transcription factor EFM (432 aa).

Positions 36–81 form a coiled coil; that stretch reads LEDLLSRLEQERLKIDAFKRELPLCMQLLNNAVEVYKQQLEAYRAN. 2 stretches are compositionally biased toward polar residues: residues 123 to 139 and 187 to 197; these read SQSE…TDQS and SPTNEHTNGQD. Positions 123–237 are disordered; it reads SQSETKPKNI…SQSNRKARRC (115 aa). A compositionally biased stretch (low complexity) spans 201–231; the sequence is ESMINNDNNYNNNNNNNSNSNGVSSTTSQSN. Residues 230–290 form the HTH myb-type domain; sequence SNRKARRCWS…HLQKYRLHTR (61 aa). A DNA-binding region (H-T-H motif) is located at residues 261 to 286; the sequence is PKQIRELMKVDGLTNDEVKSHLQKYR. Residues 354 to 412 form a disordered region; sequence FYTTPPPPQPLHHHHFQTFNGSSGGTASTDSTHHQVTDSPTVEGKSPESGGGERKGLAA.

In terms of assembly, interacts with JMJ30, but not with SVP, FLC or CO. As to expression, specifically expressed in vascular tissues of cotyledons, rosette leaves and cauline leaves. Not detected in the vegetative shoot apical meristem.

The protein resides in the nucleus. In terms of biological role, transcription factor acting as a flowering repressor, directly repressing FT expression in a dosage-dependent manner in the leaf vasculature. In Arabidopsis thaliana (Mouse-ear cress), this protein is Myb family transcription factor EFM.